The chain runs to 180 residues: Interleukin-1-binding protein (180 aa).

Residues 1–20 (MSILPVIFLPIFFYSPFVQT) form the signal peptide. N-linked (GlcNAc...) asparagine; by host glycosylation is found at asparagine 80, asparagine 103, and asparagine 113.

Belongs to the interleukin-1 receptor family. As to quaternary structure, interacts with mouse Il1b.

It is found in the secreted. In terms of biological role, may reduce the host inflammatory response by interacting with inteleukin-1 beta (Il1b) and thus decreasing the association between IL1B and its cellular receptor. The chain is Interleukin-1-binding protein (OPG201) from Monkeypox virus.